The chain runs to 72 residues: Probable movement protein p8 (72 aa).

Residues 16–58 form a disordered region; it reads GRARSVEGKKHNGSGLTGVKRHAVSETSQKSQQGTGNGTMTNI. Residues 40 to 58 show a composition bias toward polar residues; it reads SETSQKSQQGTGNGTMTNI.

The protein belongs to the carmovirus/necrovirus/panicovirus movement protein p8 family.

Functionally, cell-to-cell movement. The polypeptide is Probable movement protein p8 (Tobacco necrosis virus (strain A) (TNV-A)).